A 620-amino-acid chain; its full sequence is Proline--tRNA ligase (620 aa).

This sequence belongs to the class-II aminoacyl-tRNA synthetase family. ProS type 1 subfamily. Homodimer.

It is found in the cytoplasm. It carries out the reaction tRNA(Pro) + L-proline + ATP = L-prolyl-tRNA(Pro) + AMP + diphosphate. Functionally, catalyzes the attachment of proline to tRNA(Pro) in a two-step reaction: proline is first activated by ATP to form Pro-AMP and then transferred to the acceptor end of tRNA(Pro). As ProRS can inadvertently accommodate and process non-cognate amino acids such as alanine and cysteine, to avoid such errors it has two additional distinct editing activities against alanine. One activity is designated as 'pretransfer' editing and involves the tRNA(Pro)-independent hydrolysis of activated Ala-AMP. The other activity is designated 'posttransfer' editing and involves deacylation of mischarged Ala-tRNA(Pro). The misacylated Cys-tRNA(Pro) is not edited by ProRS. In Streptococcus thermophilus (strain CNRZ 1066), this protein is Proline--tRNA ligase.